The chain runs to 382 residues: Lipid-A-disaccharide synthase (382 aa).

Belongs to the LpxB family.

The enzyme catalyses 2-N,3-O-bis[(3R)-3-hydroxytetradecanoyl]-alpha-D-glucosaminyl 1-phosphate + UDP-2-N,3-O-bis[(3R)-3-hydroxytetradecanoyl]-alpha-D-glucosamine = lipid A disaccharide (E. coli) + UDP + H(+). It catalyses the reaction a lipid X + a UDP-2-N,3-O-bis[(3R)-3-hydroxyacyl]-alpha-D-glucosamine = a lipid A disaccharide + UDP + H(+). The protein operates within glycolipid biosynthesis; lipid IV(A) biosynthesis; lipid IV(A) from (3R)-3-hydroxytetradecanoyl-[acyl-carrier-protein] and UDP-N-acetyl-alpha-D-glucosamine: step 5/6. Condensation of UDP-2,3-diacylglucosamine and 2,3-diacylglucosamine-1-phosphate to form lipid A disaccharide, a precursor of lipid A, a phosphorylated glycolipid that anchors the lipopolysaccharide to the outer membrane of the cell. This chain is Lipid-A-disaccharide synthase, found in Salmonella typhimurium (strain LT2 / SGSC1412 / ATCC 700720).